The primary structure comprises 954 residues: DNA repair and telomere maintenance protein NBS1 (954 aa).

The FHA domain maps to 22-85; that stretch reads YLFGRTVAEA…KGTLVNGVQI (64 aa). BRCT domains lie at 107–186 and 244–349; these read TLKI…NAIV and GYTF…LEAI. The span at 368 to 377 shows a compositional bias: polar residues; sequence VSVSASVEPQ. Disordered stretches follow at residues 368 to 431, 444 to 506, 528 to 580, 630 to 654, and 692 to 954; these read VSVS…FKGF, QAQS…PLPE, IEAG…KQED, VRQP…WDPR, and GIGD…GRRR. Basic and acidic residues predominate over residues 378 to 393; the sequence is SSEKVRPAVEDRKEVE. The segment covering 416–428 has biased composition (basic residues); it reads PHRRERRTGRSRF. The span at 458-471 shows a compositional bias: polar residues; the sequence is PSASQDSLFVSQRE. Acidic residues predominate over residues 541–554; it reads PEPEREDEDVEMVE. 2 stretches are compositionally biased toward basic and acidic residues: residues 640 to 654 and 704 to 715; these read RTRE…WDPR and GRVPRRPKETQT. Positions 726–737 are enriched in low complexity; it reads DGSGFAAAAASG. Over residues 738–751 the composition is skewed to basic and acidic residues; the sequence is KGKEKDKENEKEVG. Composition is skewed to low complexity over residues 801–815 and 826–842; these read EVVS…ASEP and RANA…SQTQ. Positions 936 to 945 are enriched in acidic residues; that stretch reads GSEEESEDDE.

This sequence belongs to the Nibrin family. In terms of assembly, component of the MRN complex composed of two heterodimers RAD50 and MRE11 associated with a single NBS1.

The protein localises to the nucleus. Its subcellular location is the chromosome. Functionally, component of the MRN complex, which plays a central role in double-strand break (DSB) repair, DNA recombination, maintenance of telomere integrity and meiosis. The MRN complex is involved in the repair of DNA double-strand breaks (DSBs) via homologous recombination (HR), an error-free mechanism which primarily occurs during S and G2 phases. The complex (1) mediates the end resection of damaged DNA, which generates proper single-stranded DNA, a key initial steps in HR, and is (2) required for the recruitment of other repair factors and efficient activation of ATM and ATR upon DNA damage. The MRN complex possesses single-strand endonuclease activity and double-strand-specific 3'-5' exonuclease activity, which are provided by MRE11, to initiate end resection, which is required for single-strand invasion and recombination. Within the MRN complex, NBS1 acts as a protein-protein adapter, which specifically recognizes and binds phosphorylated proteins, promoting their recruitment to DNA damage sites. Recruits MRE11 and RAD50 components of the MRN complex to DSBs in response to DNA damage. The chain is DNA repair and telomere maintenance protein NBS1 from Chaetomium thermophilum (strain DSM 1495 / CBS 144.50 / IMI 039719) (Thermochaetoides thermophila).